Here is a 142-residue protein sequence, read N- to C-terminus: uncharacterized protein (142 aa).

The region spanning 2-142 (IHMKQLTSKE…IESYLFRKPV (141 aa)) is the N-acetyltransferase domain.

It belongs to the acetyltransferase family.

This is an uncharacterized protein from Bacillus subtilis (strain 168).